We begin with the raw amino-acid sequence, 295 residues long: Protoheme IX farnesyltransferase (295 aa).

A run of 9 helical transmembrane segments spans residues 24-43 (IMYL…PGSI), 47-69 (LALI…NMWY), 94-114 (SALE…AIAV), 117-137 (ISAI…TIWL), 144-164 (NIVI…AVVT), 171-191 (GFVL…ALSL), 216-236 (KYIL…ALFL), 241-261 (FYLG…VSIM), and 272-292 (MFSY…LCSI).

It belongs to the UbiA prenyltransferase family. Protoheme IX farnesyltransferase subfamily.

It is found in the cell membrane. The catalysed reaction is heme b + (2E,6E)-farnesyl diphosphate + H2O = Fe(II)-heme o + diphosphate. It participates in porphyrin-containing compound metabolism; heme O biosynthesis; heme O from protoheme: step 1/1. Converts heme B (protoheme IX) to heme O by substitution of the vinyl group on carbon 2 of heme B porphyrin ring with a hydroxyethyl farnesyl side group. In Wolbachia sp. subsp. Brugia malayi (strain TRS), this protein is Protoheme IX farnesyltransferase.